The following is a 482-amino-acid chain: MMETMPNWLMQRAFLTPDRTAIEMEEEKVTFMQLHEKVVSVCEHLTHVGVKRGQKVAVLMKNGMEMITVIHALSYVGAVAVLLNTRLSREELLWQMDDAEVICLVTDQDFEAKDIPVYSFAEVMNGPKEEASIQEEFSLKEAMTIIYTSGTTGKPKGVILTYGNHWASAVGSSFNLGLRDDDCWLACMPMFHVGGLSLLMKNIMYGMRILLVPKYDADFIHKALQTRGVTIISVVSKMLTDLLERLGEETYPPSLRCMLLGGGPAPKPLLEACVEKRIPVYQTYGMTETSSQICTLSADYMLMKVGSAGKPLFQCQLRIEKDGVVVPPFAEGEIVVKGPNVTGGYFNREDATRETIQNGWLHTGDLGYLDEEGFLYVLDRRSDLIISGGENIYPAQIEEVLLSHPMVAEAGVVGMTDDKWGQVPAAFVVKSGEITEEEILHFCEEKLAKYKVPKKAWFLEELPRNASKKLLRRELRQLVEEM.

The protein belongs to the ATP-dependent AMP-binding enzyme family. MenE subfamily.

It carries out the reaction 2-succinylbenzoate + ATP + CoA = 2-succinylbenzoyl-CoA + AMP + diphosphate. It participates in quinol/quinone metabolism; 1,4-dihydroxy-2-naphthoate biosynthesis; 1,4-dihydroxy-2-naphthoate from chorismate: step 5/7. The protein operates within quinol/quinone metabolism; menaquinone biosynthesis. Converts 2-succinylbenzoate (OSB) to 2-succinylbenzoyl-CoA (OSB-CoA). This is 2-succinylbenzoate--CoA ligase from Bacillus cereus (strain ZK / E33L).